Here is a 146-residue protein sequence, read N- to C-terminus: Hemoglobin subunit beta (146 aa).

Valine 1 carries the post-translational modification N-acetylvaline. A Globin domain is found at 2–146 (HLSADEKNAL…VANALAHKYH (145 aa)). Serine 44 is subject to Phosphoserine. Lysine 59 is subject to N6-acetyllysine. Residue histidine 63 participates in heme b binding. Lysine 82 is modified (N6-acetyllysine). Heme b is bound at residue histidine 92. An S-nitrosocysteine modification is found at cysteine 93. The residue at position 144 (lysine 144) is an N6-acetyllysine.

This sequence belongs to the globin family. In terms of assembly, heterotetramer of two alpha chains and two beta chains. As to expression, red blood cells.

Functionally, involved in oxygen transport from the lung to the various peripheral tissues. The sequence is that of Hemoglobin subunit beta from Sciurus carolinensis (Eastern gray squirrel).